Here is a 317-residue protein sequence, read N- to C-terminus: Malate dehydrogenase (317 aa).

NAD(+)-binding positions include 13 to 18 (GAGNIG) and D38. Substrate contacts are provided by R87 and R93. Residues N100 and 123-125 (VTN) each bind NAD(+). Positions 125 and 156 each coordinate substrate. Residue H180 is the Proton acceptor of the active site.

The protein belongs to the LDH/MDH superfamily. MDH type 3 family.

The catalysed reaction is (S)-malate + NAD(+) = oxaloacetate + NADH + H(+). Catalyzes the reversible oxidation of malate to oxaloacetate. In Anaplasma marginale (strain St. Maries), this protein is Malate dehydrogenase.